The primary structure comprises 366 residues: Alanine racemase (366 aa).

Residue Lys40 is the Proton acceptor; specific for D-alanine of the active site. Residue Lys40 is modified to N6-(pyridoxal phosphate)lysine. Arg136 is a substrate binding site. Tyr263 (proton acceptor; specific for L-alanine) is an active-site residue. Met310 is a substrate binding site.

Belongs to the alanine racemase family. Pyridoxal 5'-phosphate serves as cofactor.

The enzyme catalyses L-alanine = D-alanine. It participates in amino-acid biosynthesis; D-alanine biosynthesis; D-alanine from L-alanine: step 1/1. Functionally, catalyzes the interconversion of L-alanine and D-alanine. May also act on other amino acids. This chain is Alanine racemase (alr), found in Streptococcus pyogenes serotype M12 (strain MGAS2096).